The chain runs to 306 residues: Tryptophan 2,3-dioxygenase (306 aa).

Substrate contacts are provided by residues 75-79, Tyr137, and Arg141; that span reads FIIQH. Position 264 (His264) interacts with heme. A substrate-binding site is contributed by Thr278.

The protein belongs to the tryptophan 2,3-dioxygenase family. Homotetramer. The cofactor is heme.

It carries out the reaction L-tryptophan + O2 = N-formyl-L-kynurenine. It functions in the pathway amino-acid degradation; L-tryptophan degradation via kynurenine pathway; L-kynurenine from L-tryptophan: step 1/2. Its function is as follows. Heme-dependent dioxygenase that catalyzes the oxidative cleavage of the L-tryptophan (L-Trp) pyrrole ring and converts L-tryptophan to N-formyl-L-kynurenine. Catalyzes the oxidative cleavage of the indole moiety. This chain is Tryptophan 2,3-dioxygenase, found in Paraburkholderia phytofirmans (strain DSM 17436 / LMG 22146 / PsJN) (Burkholderia phytofirmans).